The sequence spans 102 residues: Salivary protein Salp9 (102 aa).

An N-terminal signal peptide occupies residues 1-21 (MGLTEIMLVLVSLAFVATAAA). N-linked (GlcNAc...) asparagine glycans are attached at residues asparagine 26 and asparagine 87. The tract at residues 83 to 102 (SGVPNDTDAKIEETEEELEA) is disordered.

Belongs to the salp14 family. As to expression, salivary gland (at protein level). Saliva (at protein level). Midgut.

It is found in the secreted. Its function is as follows. Salivary protein that facilitates blood feeding of adult ticks on vertebrate species. Inhibits the lectin pathway of complement system activation in the host. In Ixodes scapularis (Black-legged tick), this protein is Salivary protein Salp9.